We begin with the raw amino-acid sequence, 825 residues long: Thioredoxin domain-containing protein 16 (825 aa).

Residues 1–27 (MFSGFNVFRVGISFVIMCIFYMPTVNS) form the signal peptide. One can recognise a Thioredoxin domain in the interval 392-495 (LTVELTEETF…EDLLKFIQLN (104 aa)). A disulfide bridge links cysteine 449 with cysteine 456. Residue asparagine 460 is glycosylated (N-linked (GlcNAc...) asparagine). The segment at 762–787 (RKVPKCMKETDVQENDKEQHEDKSAV) is disordered. Residues 767-787 (CMKETDVQENDKEQHEDKSAV) show a composition bias toward basic and acidic residues. Residues 816–819 (DKEL) carry the Mediates endoplasmic reticulum retention motif.

Interacts with FOXRED2. In terms of processing, glycosylated.

It localises to the secreted. The protein resides in the endoplasmic reticulum lumen. This chain is Thioredoxin domain-containing protein 16, found in Homo sapiens (Human).